We begin with the raw amino-acid sequence, 81 residues long: Cell division protein ZapB (81 aa).

The stretch at 6–80 forms a coiled coil; sequence EVFEKLEAKV…LQALLGRMEE (75 aa). Polar residues predominate over residues 38–47; sequence SLAQDVQSAQ. The interval 38–67 is disordered; the sequence is SLAQDVQSAQHQREELERENNHLKEQQSGW. Positions 48–62 are enriched in basic and acidic residues; the sequence is HQREELERENNHLKE.

Belongs to the ZapB family. As to quaternary structure, homodimer. The ends of the coiled-coil dimer bind to each other, forming polymers. Interacts with FtsZ.

It localises to the cytoplasm. In terms of biological role, non-essential, abundant cell division factor that is required for proper Z-ring formation. It is recruited early to the divisome by direct interaction with FtsZ, stimulating Z-ring assembly and thereby promoting cell division earlier in the cell cycle. Its recruitment to the Z-ring requires functional FtsA or ZipA. This is Cell division protein ZapB from Citrobacter koseri (strain ATCC BAA-895 / CDC 4225-83 / SGSC4696).